A 461-amino-acid chain; its full sequence is Fumarate hydratase class II (461 aa).

Substrate contacts are provided by residues 97 to 99 (SGT), 127 to 130 (HPND), 137 to 139 (SSN), and Thr185. His186 functions as the Proton donor/acceptor in the catalytic mechanism. The active site involves Ser316. Substrate is bound by residues Ser317 and 322–324 (KVN).

This sequence belongs to the class-II fumarase/aspartase family. Fumarase subfamily. As to quaternary structure, homotetramer.

The protein localises to the cytoplasm. The catalysed reaction is (S)-malate = fumarate + H2O. It participates in carbohydrate metabolism; tricarboxylic acid cycle; (S)-malate from fumarate: step 1/1. Its function is as follows. Involved in the TCA cycle. Catalyzes the stereospecific interconversion of fumarate to L-malate. This Staphylococcus aureus (strain Mu50 / ATCC 700699) protein is Fumarate hydratase class II.